Reading from the N-terminus, the 461-residue chain is Xyloglucan 6-xylosyltransferase 2 (461 aa).

The Cytoplasmic segment spans residues 1–20; it reads MIERCLGAYRCRRIQRALRQ. Residues 21–40 traverse the membrane as a helical; Signal-anchor for type II membrane protein segment; sequence LKVTILCLLLTVVVLRSTIG. Topologically, residues 41–461 are lumenal; sequence AGKFGTPEQD…KAVKVQTNQV (421 aa). A disordered region spans residues 74-95; sequence QTGGDSSSGDGGGNSGGSNNYE. Asn432 is a glycosylation site (N-linked (GlcNAc...) asparagine).

This sequence belongs to the glycosyltransferase 34 family. In terms of assembly, homodimer. Interacts with XXT1 and XXT5. Interacts with FUT1 and XLT2.

The protein localises to the golgi apparatus membrane. The enzyme catalyses Transfers an alpha-D-xylosyl residue from UDP-D-xylose to a glucose residue in xyloglucan, forming an alpha-(1-&gt;6)-D-xylosyl-D-glucose linkage.. Functionally, xylosyltransferase specific to UDP-D-xylose that accepts both cellopentaose and cellohexaose as substrates, with a better use of cellohexaose, to produce xyloglucan. Adds preferentially the first xylosyl residue to the fourth glucosyl residue from the reducing end of both acceptors. Transfer one xylose mainly to the second glucose residue from the non-reducing end. The acceptor should have a minimum of four glucose residues. Associates with other xyloglucan-synthesizing enzymes to form multiprotein complexes for xyloglucan synthesis in the Golgi. The chain is Xyloglucan 6-xylosyltransferase 2 (XXT2) from Arabidopsis thaliana (Mouse-ear cress).